Reading from the N-terminus, the 300-residue chain is Tyrosine recombinase XerC (300 aa).

The Core-binding (CB) domain occupies 2–88 (IQEGKLEQQF…SLRSFYTFLL (87 aa)). The region spanning 109-294 (RLPKFFYSEE…TKEHLKSTYM (186 aa)) is the Tyr recombinase domain. Active-site residues include Arg-150, Lys-174, His-246, Arg-249, and His-272. The O-(3'-phospho-DNA)-tyrosine intermediate role is filled by Tyr-281.

Belongs to the 'phage' integrase family. XerC subfamily. As to quaternary structure, forms a cyclic heterotetrameric complex composed of two molecules of XerC and two molecules of XerD.

Its subcellular location is the cytoplasm. In terms of biological role, site-specific tyrosine recombinase, which acts by catalyzing the cutting and rejoining of the recombining DNA molecules. The XerC-XerD complex is essential to convert dimers of the bacterial chromosome into monomers to permit their segregation at cell division. It also contributes to the segregational stability of plasmids. In Listeria monocytogenes serotype 4b (strain F2365), this protein is Tyrosine recombinase XerC.